Consider the following 334-residue polypeptide: Fructose-1,6-bisphosphatase class 1 (334 aa).

Residues glutamate 92, aspartate 114, leucine 116, and aspartate 117 each contribute to the Mg(2+) site. Substrate is bound by residues aspartate 117–serine 120 and asparagine 209. Glutamate 281 lines the Mg(2+) pocket.

The protein belongs to the FBPase class 1 family. In terms of assembly, homotetramer. It depends on Mg(2+) as a cofactor.

The protein resides in the cytoplasm. The catalysed reaction is beta-D-fructose 1,6-bisphosphate + H2O = beta-D-fructose 6-phosphate + phosphate. It functions in the pathway carbohydrate biosynthesis; gluconeogenesis. This chain is Fructose-1,6-bisphosphatase class 1, found in Nitrosomonas eutropha (strain DSM 101675 / C91 / Nm57).